The chain runs to 477 residues: Aspartyl/glutamyl-tRNA(Asn/Gln) amidotransferase subunit B (477 aa).

The protein belongs to the GatB/GatE family. GatB subfamily. In terms of assembly, heterotrimer of A, B and C subunits.

It catalyses the reaction L-glutamyl-tRNA(Gln) + L-glutamine + ATP + H2O = L-glutaminyl-tRNA(Gln) + L-glutamate + ADP + phosphate + H(+). The enzyme catalyses L-aspartyl-tRNA(Asn) + L-glutamine + ATP + H2O = L-asparaginyl-tRNA(Asn) + L-glutamate + ADP + phosphate + 2 H(+). Allows the formation of correctly charged Asn-tRNA(Asn) or Gln-tRNA(Gln) through the transamidation of misacylated Asp-tRNA(Asn) or Glu-tRNA(Gln) in organisms which lack either or both of asparaginyl-tRNA or glutaminyl-tRNA synthetases. The reaction takes place in the presence of glutamine and ATP through an activated phospho-Asp-tRNA(Asn) or phospho-Glu-tRNA(Gln). The sequence is that of Aspartyl/glutamyl-tRNA(Asn/Gln) amidotransferase subunit B from Ureaplasma parvum serovar 3 (strain ATCC 27815 / 27 / NCTC 11736).